The following is a 639-amino-acid chain: tRNA uridine 5-carboxymethylaminomethyl modification enzyme MnmG (639 aa).

Glycine 15–glycine 20 provides a ligand contact to FAD. Glycine 276–phenylalanine 290 lines the NAD(+) pocket.

The protein belongs to the MnmG family. In terms of assembly, homodimer. Heterotetramer of two MnmE and two MnmG subunits. The cofactor is FAD.

It is found in the cytoplasm. Its function is as follows. NAD-binding protein involved in the addition of a carboxymethylaminomethyl (cmnm) group at the wobble position (U34) of certain tRNAs, forming tRNA-cmnm(5)s(2)U34. This is tRNA uridine 5-carboxymethylaminomethyl modification enzyme MnmG from Streptococcus gordonii (strain Challis / ATCC 35105 / BCRC 15272 / CH1 / DL1 / V288).